Here is a 144-residue protein sequence, read N- to C-terminus: Granulocyte-macrophage colony-stimulating factor (144 aa).

A signal peptide spans Met-1–Ser-17. Ser-24 carries O-linked (GalNAc...) serine glycosylation. A glycan (O-linked (GalNAc...) threonine) is linked at Thr-27. N-linked (GlcNAc...) asparagine glycans are attached at residues Asn-44 and Asn-54. 2 cysteine pairs are disulfide-bonded: Cys-71-Cys-113 and Cys-105-Cys-138.

The protein belongs to the GM-CSF family. As to quaternary structure, monomer. The signaling GM-CSF receptor complex is a dodecamer of two head-to-head hexamers of two alpha, two beta, and two ligand subunits.

The protein resides in the secreted. Its function is as follows. Cytokine that stimulates the growth and differentiation of hematopoietic precursor cells from various lineages, including granulocytes, macrophages, eosinophils and erythrocytes. In Cervus elaphus (Red deer), this protein is Granulocyte-macrophage colony-stimulating factor (CSF2).